Here is a 187-residue protein sequence, read N- to C-terminus: Large ribosomal subunit protein bL12cx (187 aa).

The N-terminal 54 residues, 1 to 54, are a transit peptide targeting the chloroplast; the sequence is MASTTLSIATTIRSSSPLTSASTHHFLSKPTAIEFPFRLSSSSSHRAINLRPIS.

The protein belongs to the bacterial ribosomal protein bL12 family.

The protein resides in the plastid. It is found in the chloroplast. This chain is Large ribosomal subunit protein bL12cx (RPL12C), found in Arabidopsis thaliana (Mouse-ear cress).